We begin with the raw amino-acid sequence, 385 residues long: Rubredoxin-NAD(+) reductase (385 aa).

Residues 8-11 (AGTA), 32-33 (SR), Ile79, Glu156, Asp275, and Ile293 each bind FAD.

It belongs to the FAD-dependent oxidoreductase family. Homodimer. FAD serves as cofactor.

The protein localises to the cytoplasm. The enzyme catalyses 2 reduced [rubredoxin] + NAD(+) + H(+) = 2 oxidized [rubredoxin] + NADH. The protein operates within hydrocarbon metabolism; alkane degradation. Its function is as follows. Involved in the hydrocarbon hydroxylating system, which transfers electrons from NADH to rubredoxin reductase and then through rubredoxin to alkane 1 monooxygenase. The chain is Rubredoxin-NAD(+) reductase (alkT) from Ectopseudomonas oleovorans (Pseudomonas oleovorans).